The primary structure comprises 179 residues: MLKPSDTWSWYYDNKAQSLMLDLGMDMVFCVNLSPKVLINSAFDDCKFSVDDASAYQMFVEHISYLPLSEPRKVELALNCVAARRFHKPMLPKSWFFETQGAGYYPEEGEIVSLKNDLGEGHFIIVENYECASMCMLVDMDAFALNPTKYMAFCEPIKVMNDRMAKMQVVNSSYYALVG.

Belongs to the ZapC family. Interacts directly with FtsZ.

It localises to the cytoplasm. Contributes to the efficiency of the cell division process by stabilizing the polymeric form of the cell division protein FtsZ. Acts by promoting interactions between FtsZ protofilaments and suppressing the GTPase activity of FtsZ. This is Cell division protein ZapC from Aliivibrio salmonicida (strain LFI1238) (Vibrio salmonicida (strain LFI1238)).